Consider the following 98-residue polypeptide: NADH-ubiquinone oxidoreductase chain 4L (98 aa).

Helical transmembrane passes span 1-21, 29-49, and 58-78; these read MPII…GMLF, SLLC…LMAL, and IVPI…LALL.

It belongs to the complex I subunit 4L family. In terms of assembly, core subunit of respiratory chain NADH dehydrogenase (Complex I) which is composed of 45 different subunits.

It localises to the mitochondrion inner membrane. The catalysed reaction is a ubiquinone + NADH + 5 H(+)(in) = a ubiquinol + NAD(+) + 4 H(+)(out). In terms of biological role, core subunit of the mitochondrial membrane respiratory chain NADH dehydrogenase (Complex I) which catalyzes electron transfer from NADH through the respiratory chain, using ubiquinone as an electron acceptor. Part of the enzyme membrane arm which is embedded in the lipid bilayer and involved in proton translocation. In Trachypithecus obscurus (Dusky leaf-monkey), this protein is NADH-ubiquinone oxidoreductase chain 4L (MT-ND4L).